Consider the following 388-residue polypeptide: Succinyl-diaminopimelate desuccinylase (388 aa).

His75 serves as a coordination point for Zn(2+). The active site involves Asp77. Zn(2+) is bound at residue Asp108. Residue Glu142 is the Proton acceptor of the active site. The Zn(2+) site is built by Glu143, Glu171, and His361.

Belongs to the peptidase M20A family. DapE subfamily. In terms of assembly, homodimer. The cofactor is Zn(2+). It depends on Co(2+) as a cofactor.

It catalyses the reaction N-succinyl-(2S,6S)-2,6-diaminopimelate + H2O = (2S,6S)-2,6-diaminopimelate + succinate. It participates in amino-acid biosynthesis; L-lysine biosynthesis via DAP pathway; LL-2,6-diaminopimelate from (S)-tetrahydrodipicolinate (succinylase route): step 3/3. Its function is as follows. Catalyzes the hydrolysis of N-succinyl-L,L-diaminopimelic acid (SDAP), forming succinate and LL-2,6-diaminopimelate (DAP), an intermediate involved in the bacterial biosynthesis of lysine and meso-diaminopimelic acid, an essential component of bacterial cell walls. In Methylocella silvestris (strain DSM 15510 / CIP 108128 / LMG 27833 / NCIMB 13906 / BL2), this protein is Succinyl-diaminopimelate desuccinylase.